The following is a 97-amino-acid chain: DNA/RNA-binding protein Alba (97 aa).

At Lys15 the chain carries N6-acetyllysine.

The protein belongs to the histone-like Alba family. Post-translationally, acetylated. Acetylation at Lys-15 decreases DNA-binding affinity.

It is found in the cytoplasm. Its subcellular location is the chromosome. Binds double-stranded DNA tightly but without sequence specificity. Involved in DNA compaction. The chain is DNA/RNA-binding protein Alba from Ignicoccus hospitalis (strain KIN4/I / DSM 18386 / JCM 14125).